The sequence spans 258 residues: Ribonuclease HII (258 aa).

The RNase H type-2 domain occupies 71–258; the sequence is ELIAGIDEVG…PIKSMVNFKY (188 aa). Residues Asp77, Glu78, and Asp169 each coordinate a divalent metal cation.

It belongs to the RNase HII family. Mn(2+) is required as a cofactor. It depends on Mg(2+) as a cofactor.

Its subcellular location is the cytoplasm. It carries out the reaction Endonucleolytic cleavage to 5'-phosphomonoester.. Functionally, endonuclease that specifically degrades the RNA of RNA-DNA hybrids. The protein is Ribonuclease HII of Lactococcus lactis subsp. cremoris (strain SK11).